The sequence spans 152 residues: Dynein light chain Tctex-type protein 2B (152 aa).

It belongs to the dynein light chain Tctex-type family. In terms of assembly, light chain of the cytoplasmic dynein complex 2, a multisubunit complex composed at least of eleven different proteins. The cytoplasmic dynein 2 complex consists of two catalytic heavy chains (HCs) and a number of non-catalytic subunits presented by intermediate chains (ICs), light intermediate chains (LICs) and light chains (LCs). Among them, a heavy chain (DYNC2H1), two intermediate chains (DYNC2I2 and DYNC2I1), a light intermediate chain (DYNC2LI1), and a light chain (DYNLT2B) are unique to the dynein-2 complex, but a subset of the light chains are also shared by dynein-1 and dynein-2 complexes. The dimer DYNLT2B-DYNLT1/DYNLT3 interacts with DYNC2I1; this interaction is crucial for retrograde trafficking of ciliary proteins.

It is found in the dynein axonemal particle. Acts as one of several non-catalytic accessory components of the cytoplasmic dynein 2 complex (dynein-2 complex), a motor protein complex that drives the movement of cargos along microtubules within cilia and flagella in concert with the intraflagellar transport (IFT) system. Required for proper retrograde ciliary transport. The polypeptide is Dynein light chain Tctex-type protein 2B (DYNLT2B) (Bos taurus (Bovine)).